The primary structure comprises 844 residues: Protein translocase subunit SecA (844 aa).

Residues Gln-89, 107 to 111 (GEGKT), and Asp-497 each bind ATP. Residues Cys-829, Cys-831, Cys-840, and His-841 each coordinate Zn(2+).

The protein belongs to the SecA family. Monomer and homodimer. Part of the essential Sec protein translocation apparatus which comprises SecA, SecYEG and auxiliary proteins SecDF. Other proteins may also be involved. Zn(2+) serves as cofactor.

The protein resides in the cell membrane. Its subcellular location is the cytoplasm. It carries out the reaction ATP + H2O + cellular proteinSide 1 = ADP + phosphate + cellular proteinSide 2.. In terms of biological role, part of the Sec protein translocase complex. Interacts with the SecYEG preprotein conducting channel. Has a central role in coupling the hydrolysis of ATP to the transfer of proteins into and across the cell membrane, serving as an ATP-driven molecular motor driving the stepwise translocation of polypeptide chains across the membrane. This Streptococcus suis (strain 98HAH33) protein is Protein translocase subunit SecA.